Consider the following 81-residue polypeptide: NADH-ubiquinone oxidoreductase chain 6 (81 aa).

3 consecutive transmembrane segments (helical) span residues 1–21 (MTYF…GVAS), 27–47 (YGVV…LSLG), and 48–68 (VSFV…VVFV).

Belongs to the complex I subunit 6 family.

It localises to the mitochondrion membrane. The catalysed reaction is a ubiquinone + NADH + 5 H(+)(in) = a ubiquinol + NAD(+) + 4 H(+)(out). Core subunit of the mitochondrial membrane respiratory chain NADH dehydrogenase (Complex I) that is believed to belong to the minimal assembly required for catalysis. Complex I functions in the transfer of electrons from NADH to the respiratory chain. The immediate electron acceptor for the enzyme is believed to be ubiquinone. In Anas platyrhynchos (Mallard), this protein is NADH-ubiquinone oxidoreductase chain 6 (MT-ND6).